The following is a 230-amino-acid chain: Nucleoside diphosphate kinase 2, chloroplastic (230 aa).

The N-terminal 64 residues, 1 to 64, are a transit peptide targeting the chloroplast; it reads MEAMAVFSGS…SYPKTFRTRS (64 aa). The ATP site is built by Lys-90, Phe-138, Arg-166, Thr-172, Arg-183, and Asn-193. The active-site Pros-phosphohistidine intermediate is the His-196.

It belongs to the NDK family. The cofactor is Mg(2+).

The protein localises to the plastid. Its subcellular location is the chloroplast. The catalysed reaction is a 2'-deoxyribonucleoside 5'-diphosphate + ATP = a 2'-deoxyribonucleoside 5'-triphosphate + ADP. It catalyses the reaction a ribonucleoside 5'-diphosphate + ATP = a ribonucleoside 5'-triphosphate + ADP. Functionally, major role in the synthesis of nucleoside triphosphates other than ATP. The ATP gamma phosphate is transferred to the NDP beta phosphate via a ping-pong mechanism, using a phosphorylated active-site intermediate. This chain is Nucleoside diphosphate kinase 2, chloroplastic (NDPK2), found in Pisum sativum (Garden pea).